Reading from the N-terminus, the 354-residue chain is DNA integrity scanning protein DisA (354 aa).

The 139-residue stretch at 6 to 144 (GIGIKNVLKI…GDIKYVLRES (139 aa)) folds into the DAC domain. ATP contacts are provided by residues G73, L91, and 104-108 (TRHRT).

The protein belongs to the DisA family. Homooctamer. Mg(2+) is required as a cofactor.

The catalysed reaction is 2 ATP = 3',3'-c-di-AMP + 2 diphosphate. Participates in a DNA-damage check-point that is active prior to asymmetric division when DNA is damaged. DisA forms globular foci that rapidly scan along the chromosomes during sporulation, searching for lesions. When a lesion is present, DisA pauses at the lesion site. This triggers a cellular response that culminates in a temporary block in sporulation initiation. In terms of biological role, also has diadenylate cyclase activity, catalyzing the condensation of 2 ATP molecules into cyclic di-AMP (c-di-AMP). c-di-AMP acts as a signaling molecule that couples DNA integrity with progression of sporulation. The rise in c-di-AMP level generated by DisA while scanning the chromosome, operates as a positive signal that advances sporulation; upon encountering a lesion, the DisA focus arrests at the damaged site and halts c-di-AMP synthesis. This chain is DNA integrity scanning protein DisA, found in Clostridium beijerinckii (strain ATCC 51743 / NCIMB 8052) (Clostridium acetobutylicum).